A 495-amino-acid polypeptide reads, in one-letter code: Cysteine--tRNA ligase (495 aa).

Cys29 contributes to the Zn(2+) binding site. A 'HIGH' region motif is present at residues 31–41; that stretch reads VTVYDDSHVGH. The Zn(2+) site is built by Cys209, His234, and Glu238. Positions 266–270 match the 'KMSKS' region motif; the sequence is KMSKS. Residue Lys269 participates in ATP binding.

This sequence belongs to the class-I aminoacyl-tRNA synthetase family. In terms of assembly, monomer. Zn(2+) is required as a cofactor.

It is found in the cytoplasm. It catalyses the reaction tRNA(Cys) + L-cysteine + ATP = L-cysteinyl-tRNA(Cys) + AMP + diphosphate. This Aquifex aeolicus (strain VF5) protein is Cysteine--tRNA ligase (cysS).